Consider the following 419-residue polypeptide: S-adenosylmethionine synthase (419 aa).

Position 15 (His-15) interacts with ATP. Residue Asp-17 participates in Mg(2+) binding. K(+) is bound at residue Glu-43. Residues Glu-56 and Gln-100 each coordinate L-methionine. Positions 100-110 (QSPDIAQGVNE) are flexible loop. Residues 171-173 (DGK), 248-249 (KF), Asp-257, 263-264 (RK), Ala-280, and Lys-284 contribute to the ATP site. Asp-257 lines the L-methionine pocket. Lys-288 contacts L-methionine.

It belongs to the AdoMet synthase family. Homotetramer; dimer of dimers. Requires Mg(2+) as cofactor. K(+) serves as cofactor.

The protein resides in the cytoplasm. The enzyme catalyses L-methionine + ATP + H2O = S-adenosyl-L-methionine + phosphate + diphosphate. It participates in amino-acid biosynthesis; S-adenosyl-L-methionine biosynthesis; S-adenosyl-L-methionine from L-methionine: step 1/1. Functionally, catalyzes the formation of S-adenosylmethionine (AdoMet) from methionine and ATP. The overall synthetic reaction is composed of two sequential steps, AdoMet formation and the subsequent tripolyphosphate hydrolysis which occurs prior to release of AdoMet from the enzyme. The protein is S-adenosylmethionine synthase of Prochlorococcus marinus (strain MIT 9313).